Here is a 173-residue protein sequence, read N- to C-terminus: Trafficking regulator of GLUT4 1 (173 aa).

The span at 1–17 (MANPVQPQLQDPGSTSP) shows a compositional bias: polar residues. The interval 1–22 (MANPVQPQLQDPGSTSPLDLPE) is disordered. Topologically, residues 1–102 (MANPVQPQLQ…QDQEAPKDYL (102 aa)) are cytoplasmic. A phosphoserine mark is found at S16, S43, S45, S70, S84, and S85. The segment at residues 103-123 (VLAIASCFCPVWPLNLIPLIF) is an intramembrane region (helical). Over 124–150 (SIMSRSSVQQGDLDGARRLGRLARLLS) the chain is Cytoplasmic. A helical membrane pass occupies residues 151 to 171 (ITFIILGIVIIIVAVTVNFTV). At 172–173 (PK) the chain is on the extracellular side.

Belongs to the CD225/Dispanin family. In terms of assembly, interacts with SLC2A4; the interaction is required for proper SLC2A4 reacycling after insulin stimulation. In terms of tissue distribution, present in adipose tissue and undetectable in other tissues (at protein level).

It is found in the cell membrane. It localises to the endomembrane system. The protein localises to the cytoplasm. Its subcellular location is the perinuclear region. Functionally, regulates insulin-mediated adipose tissue glucose uptake and transport by modulation of SLC2A4 recycling. Not required for SLC2A4 membrane fusion upon an initial stimulus, but rather is necessary for proper protein recycling during prolonged insulin stimulation. The chain is Trafficking regulator of GLUT4 1 from Rattus norvegicus (Rat).